The chain runs to 423 residues: Ferrochelatase, mitochondrial (423 aa).

A mitochondrion-targeting transit peptide spans 1-54 (MRSLGANMAAALRAAGVLLRDPLVSSSWRVYQPWRWKSVAAAAAATTETAQHAQ). At Lys-57 the chain carries N6-acetyllysine. Protoporphyrin IX-binding residues include Arg-115, Tyr-123, and Ser-130. Lys-138 carries the N6-succinyllysine modification. [2Fe-2S] cluster is bound at residue Cys-196. Active-site residues include His-230 and Asp-383. [2Fe-2S] cluster is bound by residues Cys-403, Cys-406, and Cys-411. The residue at position 415 (Lys-415) is an N6-acetyllysine; alternate. Lys-415 is subject to N6-succinyllysine; alternate.

Belongs to the ferrochelatase family. Homodimer. Homotetramer. Interaction with PGRMC1; the interaction results in decreased FECH activity. Interacts with ABCB10 and SLC25A37; this interaction forms an oligomeric complex. Forms a complex with ABCB7 and ABCB10, where a dimeric FECH bridges ABCB7 and ABCB10 homodimers; this complex may be required for cellular iron homeostasis, mitochondrial function and heme biosynthesis. Interacts with ABCB7 and ABCB10. [2Fe-2S] cluster is required as a cofactor.

It localises to the mitochondrion inner membrane. The enzyme catalyses heme b + 2 H(+) = protoporphyrin IX + Fe(2+). Its pathway is porphyrin-containing compound metabolism; protoheme biosynthesis; protoheme from protoporphyrin-IX: step 1/1. Catalyzes the ferrous insertion into protoporphyrin IX and participates in the terminal step in the heme biosynthetic pathway. The polypeptide is Ferrochelatase, mitochondrial (Pan troglodytes (Chimpanzee)).